The following is an 83-amino-acid chain: Neurotoxin 3FTx-RI (83 aa).

The signal sequence occupies residues 1–21 (MKTLLLTLVVLTIVCLDLGHT). Intrachain disulfides connect Cys-24-Cys-45, Cys-38-Cys-62, Cys-64-Cys-75, and Cys-76-Cys-81.

This sequence belongs to the three-finger toxin family. Short-chain subfamily. Type I alpha-neurotoxin sub-subfamily. In terms of tissue distribution, expressed by the venom gland.

The protein resides in the secreted. Binds to muscle nicotinic acetylcholine receptor (nAChR) and inhibit acetylcholine from binding to the receptor, thereby impairing neuromuscular transmission. The protein is Neurotoxin 3FTx-RI of Bungarus fasciatus (Banded krait).